We begin with the raw amino-acid sequence, 227 residues long: Phosphatidylserine decarboxylase proenzyme (227 aa).

The active-site Schiff-base intermediate with substrate; via pyruvic acid is Ser181. Ser181 is modified (pyruvic acid (Ser); by autocatalysis).

Belongs to the phosphatidylserine decarboxylase family. PSD-A subfamily. In terms of assembly, heterodimer of a large membrane-associated beta subunit and a small pyruvoyl-containing alpha subunit. Requires pyruvate as cofactor. In terms of processing, is synthesized initially as an inactive proenzyme. Formation of the active enzyme involves a self-maturation process in which the active site pyruvoyl group is generated from an internal serine residue via an autocatalytic post-translational modification. Two non-identical subunits are generated from the proenzyme in this reaction, and the pyruvate is formed at the N-terminus of the alpha chain, which is derived from the carboxyl end of the proenzyme. The post-translation cleavage follows an unusual pathway, termed non-hydrolytic serinolysis, in which the side chain hydroxyl group of the serine supplies its oxygen atom to form the C-terminus of the beta chain, while the remainder of the serine residue undergoes an oxidative deamination to produce ammonia and the pyruvoyl prosthetic group on the alpha chain.

It localises to the cell membrane. It carries out the reaction a 1,2-diacyl-sn-glycero-3-phospho-L-serine + H(+) = a 1,2-diacyl-sn-glycero-3-phosphoethanolamine + CO2. It functions in the pathway phospholipid metabolism; phosphatidylethanolamine biosynthesis; phosphatidylethanolamine from CDP-diacylglycerol: step 2/2. Its function is as follows. Catalyzes the formation of phosphatidylethanolamine (PtdEtn) from phosphatidylserine (PtdSer). This chain is Phosphatidylserine decarboxylase proenzyme, found in Anaplasma phagocytophilum (strain HZ).